Reading from the N-terminus, the 64-residue chain is Large ribosomal subunit protein uL30 (64 aa).

Belongs to the universal ribosomal protein uL30 family. Part of the 50S ribosomal subunit.

The polypeptide is Large ribosomal subunit protein uL30 (Methylorubrum populi (strain ATCC BAA-705 / NCIMB 13946 / BJ001) (Methylobacterium populi)).